The following is a 203-amino-acid chain: UPF0637 protein EF_3078 (203 aa).

The protein belongs to the UPF0637 family.

The chain is UPF0637 protein EF_3078 from Enterococcus faecalis (strain ATCC 700802 / V583).